Consider the following 184-residue polypeptide: Photosystem I assembly protein Ycf4 (184 aa).

Helical transmembrane passes span 21 to 43 (NFFW…ISSY) and 58 to 78 (LFVP…FISS).

Belongs to the Ycf4 family.

The protein localises to the plastid. It is found in the chloroplast thylakoid membrane. Functionally, seems to be required for the assembly of the photosystem I complex. In Pinus thunbergii (Japanese black pine), this protein is Photosystem I assembly protein Ycf4.